The chain runs to 21 residues: thr operon leader peptide (21 aa).

Belongs to the thr operon leader peptide family.

This protein is involved in control of the biosynthesis of threonine. This chain is thr operon leader peptide, found in Salmonella choleraesuis (strain SC-B67).